The primary structure comprises 265 residues: Polyphosphate glucokinase (265 aa).

The span at 1-18 (MTSTGPETSETPGATTQR) shows a compositional bias: polar residues. Residues 1 to 22 (MTSTGPETSETPGATTQRHGFG) form a disordered region. 24-29 (DVGGSG) is an ATP binding site.

Belongs to the ROK (NagC/XylR) family. In terms of assembly, homodimer.

The enzyme catalyses [phosphate](n) + D-glucose = [phosphate](n-1) + D-glucose 6-phosphate + H(+). The catalysed reaction is D-glucose + ATP = D-glucose 6-phosphate + ADP + H(+). Catalyzes the phosphorylation of glucose using polyphosphate or ATP as the phosphoryl donor. Polyphosphate, rather than ATP, seems to be the major phosphate donor for the enzyme in M.tuberculosis. This chain is Polyphosphate glucokinase (ppgK), found in Mycobacterium tuberculosis (strain CDC 1551 / Oshkosh).